The following is a 224-amino-acid chain: Cytidylate kinase (224 aa).

An ATP-binding site is contributed by 14–22; that stretch reads GPAGSGKST.

Belongs to the cytidylate kinase family. Type 1 subfamily.

Its subcellular location is the cytoplasm. The enzyme catalyses CMP + ATP = CDP + ADP. It catalyses the reaction dCMP + ATP = dCDP + ADP. The protein is Cytidylate kinase of Mycoplasmoides gallisepticum (strain R(low / passage 15 / clone 2)) (Mycoplasma gallisepticum).